Consider the following 121-residue polypeptide: Large ribosomal subunit protein uL24 (121 aa).

This sequence belongs to the universal ribosomal protein uL24 family. As to quaternary structure, part of the 50S ribosomal subunit.

Its function is as follows. One of two assembly initiator proteins, it binds directly to the 5'-end of the 23S rRNA, where it nucleates assembly of the 50S subunit. Functionally, located at the polypeptide exit tunnel on the outside of the subunit. The polypeptide is Large ribosomal subunit protein uL24 (Methanocorpusculum labreanum (strain ATCC 43576 / DSM 4855 / Z)).